We begin with the raw amino-acid sequence, 1020 residues long: Valine--tRNA ligase (1020 aa).

The 'HIGH' region motif lies at 45–55 (PNVTGALHVGH). A 'KMSKS' region motif is present at residues 661–665 (KMSKT). Lys664 is an ATP binding site. The stretch at 955–1020 (AEKDRLEKAK…EALARLAELG (66 aa)) forms a coiled coil.

This sequence belongs to the class-I aminoacyl-tRNA synthetase family. ValS type 1 subfamily. Monomer.

Its subcellular location is the cytoplasm. It carries out the reaction tRNA(Val) + L-valine + ATP = L-valyl-tRNA(Val) + AMP + diphosphate. Its function is as follows. Catalyzes the attachment of valine to tRNA(Val). As ValRS can inadvertently accommodate and process structurally similar amino acids such as threonine, to avoid such errors, it has a 'posttransfer' editing activity that hydrolyzes mischarged Thr-tRNA(Val) in a tRNA-dependent manner. This is Valine--tRNA ligase from Ruegeria pomeroyi (strain ATCC 700808 / DSM 15171 / DSS-3) (Silicibacter pomeroyi).